We begin with the raw amino-acid sequence, 213 residues long: Large ribosomal subunit protein uL1 (213 aa).

Belongs to the universal ribosomal protein uL1 family. Part of the 50S ribosomal subunit.

Binds directly to 23S rRNA. Probably involved in E site tRNA release. In terms of biological role, protein L1 is also a translational repressor protein, it controls the translation of its operon by binding to its mRNA. The polypeptide is Large ribosomal subunit protein uL1 (Methanococcus maripaludis (strain C6 / ATCC BAA-1332)).